The sequence spans 908 residues: Mechanosensitive ion channel protein 8 (908 aa).

The segment covering M1–P25 has biased composition (polar residues). Disordered stretches follow at residues M1–V88, D148–A172, V190–E221, and V242–G265. Basic and acidic residues predominate over residues P31–S70. Polar residues-rich tracts occupy residues Q75–H85 and H156–D171. Over residues S196–S206 the composition is skewed to low complexity. A compositionally biased stretch (polar residues) spans A207–L218. The segment covering R247–E256 has biased composition (basic and acidic residues). The next 6 helical transmembrane spans lie at A298–L318, L341–I361, A381–K401, F411–I431, M673–A693, and A709–V729.

It belongs to the MscS (TC 1.A.23) family. As to expression, expressed in tricellular and mature pollen, and in germinating tube. Not detected in leaves or roots.

The protein localises to the cell membrane. It localises to the endomembrane system. Its activity is regulated as follows. Not regulated by MgCl(2), ruthenium red or tetramethylammonium-Cl. Its function is as follows. Mechanosensitive channel that opens in response to stretch forces in the membrane lipid bilayer. Exhibits a 6.3-fold preference for chloride over sodium. Regulates osmotic forces during pollen hydration and germination. The sequence is that of Mechanosensitive ion channel protein 8 from Arabidopsis thaliana (Mouse-ear cress).